A 378-amino-acid polypeptide reads, in one-letter code: 1-acyl-sn-glycerol-3-phosphate acyltransferase delta (378 aa).

A helical transmembrane segment spans residues 11-31 (FLCHLVFCYVFIASGLIVNAI). The short motif at 96 to 101 (HKFEID) is the HXXXXD motif element. Transmembrane regions (helical) follow at residues 125–145 (ELAY…IFCT), 311–331 (WLFW…SMVS), and 338–358 (LASL…MIGV).

This sequence belongs to the 1-acyl-sn-glycerol-3-phosphate acyltransferase family.

Its subcellular location is the endoplasmic reticulum membrane. The catalysed reaction is a 1-acyl-sn-glycero-3-phosphate + an acyl-CoA = a 1,2-diacyl-sn-glycero-3-phosphate + CoA. It carries out the reaction (4Z,7Z,10Z,13Z,16Z,19Z)-docosahexaenoyl-CoA + 1-hexadecanoyl-sn-glycero-3-phosphate = 1-hexadecanoyl-2-(4Z,7Z,10Z,13Z,16Z,19Z-docosahexaenoyl)-sn-glycero-3-phosphate + CoA. It catalyses the reaction 1-octadecanoyl-sn-glycero-3-phosphate + (9Z,12Z)-octadecadienoyl-CoA = 1-octadecanoyl-2-(9Z,12Z-octadecadienoyl)-sn-glycero-3-phosphate + CoA. The enzyme catalyses 1-octadecanoyl-sn-glycero-3-phosphate + (4Z,7Z,10Z,13Z,16Z,19Z)-docosahexaenoyl-CoA = 1-octadecanoyl-2-(4Z,7Z,10Z,13Z,16Z,19Z-docosahexaenoyl)-sn-glycero-3-phosphate + CoA. The catalysed reaction is (4Z,7Z,10Z,13Z,16Z,19Z)-docosahexaenoyl-CoA + 1-(9Z-octadecenoyl)-sn-glycero-3-phosphate = 1-(9Z-octadecenoyl)-2-(4Z,7Z,10Z,13Z,16Z,19Z-docosahexaenoyl)-sn-glycero-3-phosphate + CoA. It functions in the pathway phospholipid metabolism; CDP-diacylglycerol biosynthesis; CDP-diacylglycerol from sn-glycerol 3-phosphate: step 2/3. In terms of biological role, converts 1-acyl-sn-glycerol-3-phosphate (lysophosphatidic acid or LPA) into 1,2-diacyl-sn-glycerol-3-phosphate (phosphatidic acid or PA) by incorporating an acyl moiety at the sn-2 position of the glycerol backbone. Exhibits high acyl-CoA specificity for polyunsaturated fatty acyl-CoA, especially docosahexaenoyl-CoA (22:6-CoA, DHA-CoA). In Rattus norvegicus (Rat), this protein is 1-acyl-sn-glycerol-3-phosphate acyltransferase delta (Agpat4).